The chain runs to 300 residues: Glycine betaine/carnitine transport binding protein GbuC (300 aa).

Residues 1 to 20 form the signal peptide; it reads MLKKLITTAVLAMLIFTLAA. The N-palmitoyl cysteine moiety is linked to residue Cys21. A lipid anchor (S-diacylglycerol cysteine) is attached at Cys21.

The complex is composed of two ATP-binding proteins (GbuA), two transmembrane proteins (GbuB) and a solute-binding protein (GbuC).

The protein localises to the cell membrane. The complex is activated by an osmotic gradient or by low temperature. Part of the ABC transporter complex GbuABC involved in glycine betaine uptake. Involved, with BetL and OpuC, in osmoprotection and cryoprotection of Listeria. Can also uptake carnitine when carnitine is abundant in the growth medium. This chain is Glycine betaine/carnitine transport binding protein GbuC (gbuC), found in Listeria monocytogenes serotype 1/2a (strain 10403S).